A 185-amino-acid polypeptide reads, in one-letter code: Ribosome maturation factor RimM (185 aa).

The PRC barrel domain maps to K105–K184.

It belongs to the RimM family. In terms of assembly, binds ribosomal protein uS19.

Its subcellular location is the cytoplasm. Its function is as follows. An accessory protein needed during the final step in the assembly of 30S ribosomal subunit, possibly for assembly of the head region. Essential for efficient processing of 16S rRNA. May be needed both before and after RbfA during the maturation of 16S rRNA. It has affinity for free ribosomal 30S subunits but not for 70S ribosomes. The chain is Ribosome maturation factor RimM from Blochmanniella floridana.